The chain runs to 224 residues: GTP-binding protein RHO3 (224 aa).

GTP is bound at residue 22 to 29 (GDGACGKT). The short motif at 44-52 (YEPTVFENY) is the Effector region element. GTP contacts are provided by residues 69–73 (DTAGQ) and 127–130 (LKCD). The interval 205 to 224 (TPKGARDSAPEAESSSCTIM) is disordered. C221 is modified (cysteine methyl ester). C221 carries the S-geranylgeranyl cysteine lipid modification. A propeptide spans 222–224 (TIM) (removed in mature form).

Belongs to the small GTPase superfamily. Rho family.

Its subcellular location is the cell membrane. Functionally, involved in the regulation of actin polarization. Rho proteins are required for distinct steps during polarized hyphal growth of A.gossypii. This Eremothecium gossypii (strain ATCC 10895 / CBS 109.51 / FGSC 9923 / NRRL Y-1056) (Yeast) protein is GTP-binding protein RHO3 (RHO3).